The chain runs to 402 residues: Elongation factor Tu (402 aa).

Positions 10 to 212 (KPHINIGTIG…AVDEYIPEPK (203 aa)) constitute a tr-type G domain. The segment at 19-26 (GHVDHGKT) is G1. Position 19 to 26 (19 to 26 (GHVDHGKT)) interacts with GTP. Residue Thr26 coordinates Mg(2+). Residues 60-64 (GITIA) form a G2 region. The segment at 81–84 (DCPG) is G3. GTP is bound by residues 81-85 (DCPGH) and 136-139 (NKED). Residues 136 to 139 (NKED) form a G4 region. Positions 177 to 179 (SAF) are G5.

This sequence belongs to the TRAFAC class translation factor GTPase superfamily. Classic translation factor GTPase family. EF-Tu/EF-1A subfamily. In terms of assembly, monomer.

The protein resides in the cytoplasm. The enzyme catalyses GTP + H2O = GDP + phosphate + H(+). In terms of biological role, GTP hydrolase that promotes the GTP-dependent binding of aminoacyl-tRNA to the A-site of ribosomes during protein biosynthesis. The sequence is that of Elongation factor Tu from Sulfurovum sp. (strain NBC37-1).